Consider the following 226-residue polypeptide: ATP synthase F(0) complex subunit a (226 aa).

The next 6 helical transmembrane spans lie at 12-32, 68-88, 97-117, 138-158, 164-184, and 189-209; these read PTMM…ILFP, WALM…LGLL, QLSM…ITGF, IPML…ALAV, ITAG…LMDI, and AFIT…VALI.

The protein belongs to the ATPase A chain family. As to quaternary structure, component of the ATP synthase complex composed at least of ATP5F1A/subunit alpha, ATP5F1B/subunit beta, ATP5MC1/subunit c (homooctomer), MT-ATP6/subunit a, MT-ATP8/subunit 8, ATP5ME/subunit e, ATP5MF/subunit f, ATP5MG/subunit g, ATP5MK/subunit k, ATP5MJ/subunit j, ATP5F1C/subunit gamma, ATP5F1D/subunit delta, ATP5F1E/subunit epsilon, ATP5PF/subunit F6, ATP5PB/subunit b, ATP5PD/subunit d, ATP5PO/subunit OSCP. ATP synthase complex consists of a soluble F(1) head domain (subunits alpha(3) and beta(3)) - the catalytic core - and a membrane F(0) domain - the membrane proton channel (subunits c, a, 8, e, f, g, k and j). These two domains are linked by a central stalk (subunits gamma, delta, and epsilon) rotating inside the F1 region and a stationary peripheral stalk (subunits F6, b, d, and OSCP). Interacts with DNAJC30; interaction is direct.

The protein localises to the mitochondrion inner membrane. It catalyses the reaction H(+)(in) = H(+)(out). Its function is as follows. Subunit a, of the mitochondrial membrane ATP synthase complex (F(1)F(0) ATP synthase or Complex V) that produces ATP from ADP in the presence of a proton gradient across the membrane which is generated by electron transport complexes of the respiratory chain. ATP synthase complex consist of a soluble F(1) head domain - the catalytic core - and a membrane F(1) domain - the membrane proton channel. These two domains are linked by a central stalk rotating inside the F(1) region and a stationary peripheral stalk. During catalysis, ATP synthesis in the catalytic domain of F(1) is coupled via a rotary mechanism of the central stalk subunits to proton translocation. With the subunit c (ATP5MC1), forms the proton-conducting channel in the F(0) domain, that contains two crucial half-channels (inlet and outlet) that facilitate proton movement from the mitochondrial intermembrane space (IMS) into the matrix. Protons are taken up via the inlet half-channel and released through the outlet half-channel, following a Grotthuss mechanism. This Halichoerus grypus (Gray seal) protein is ATP synthase F(0) complex subunit a.